The following is a 339-amino-acid chain: Ketol-acid reductoisomerase (NADP(+)) (339 aa).

The 182-residue stretch at 1–182 (MRVYYDRDAD…GGGRAGIIET (182 aa)) folds into the KARI N-terminal Rossmann domain. NADP(+) is bound by residues 24 to 27 (YGSQ), R48, S51, and 83 to 86 (DEGQ). H108 is an active-site residue. Position 134 (G134) interacts with NADP(+). The KARI C-terminal knotted domain occupies 183 to 328 (SFKEEVETDL…EKLRGMMPWI (146 aa)). Mg(2+) is bound by residues D191, E195, E227, and E231. S252 is a substrate binding site.

It belongs to the ketol-acid reductoisomerase family. Mg(2+) is required as a cofactor.

The catalysed reaction is (2R)-2,3-dihydroxy-3-methylbutanoate + NADP(+) = (2S)-2-acetolactate + NADPH + H(+). It catalyses the reaction (2R,3R)-2,3-dihydroxy-3-methylpentanoate + NADP(+) = (S)-2-ethyl-2-hydroxy-3-oxobutanoate + NADPH + H(+). Its pathway is amino-acid biosynthesis; L-isoleucine biosynthesis; L-isoleucine from 2-oxobutanoate: step 2/4. The protein operates within amino-acid biosynthesis; L-valine biosynthesis; L-valine from pyruvate: step 2/4. Involved in the biosynthesis of branched-chain amino acids (BCAA). Catalyzes an alkyl-migration followed by a ketol-acid reduction of (S)-2-acetolactate (S2AL) to yield (R)-2,3-dihydroxy-isovalerate. In the isomerase reaction, S2AL is rearranged via a Mg-dependent methyl migration to produce 3-hydroxy-3-methyl-2-ketobutyrate (HMKB). In the reductase reaction, this 2-ketoacid undergoes a metal-dependent reduction by NADPH to yield (R)-2,3-dihydroxy-isovalerate. This is Ketol-acid reductoisomerase (NADP(+)) from Gluconacetobacter diazotrophicus (strain ATCC 49037 / DSM 5601 / CCUG 37298 / CIP 103539 / LMG 7603 / PAl5).